Here is a 62-residue protein sequence, read N- to C-terminus: Excisionase (62 aa).

The protein is Excisionase (xis) of Streptomyces ambofaciens.